The primary structure comprises 333 residues: MSNIDLIIKKEISLDELREKIIKGYDITKEEAMQLVEAPLEDLCSVANEIRKYFCSNTFDMCSIINAKSGKCSENCKFCAQSSHYDTKCDEYDILDKEKILEQGKSDFNKGVLRYSIVTSGRALYGKEIDEVYDAIETLNKETDGYICASLGLLDEEGFNKMKNAGLKRVHNNLEASRNFFSKVCTTHTYDDKINAIKAAQKAGMVVCSGGIMGMGETWEDRIDMAIELRELGIMSIPVNMLNPIASTPFENIEPLTEDDMRRIVAIYRFINPRAFIRLAGGRGLMKDKGKSCFLSGANAAITGDMLTTAGISIETDKKMVEELGYKIELKED.

Residues 54–283 form the Radical SAM core domain; it reads FCSNTFDMCS…RAFIRLAGGR (230 aa). Residues C72, C76, and C79 each coordinate [4Fe-4S] cluster. [2Fe-2S] cluster is bound by residues S116, C148, C208, and R278.

The protein belongs to the radical SAM superfamily. Biotin synthase family. As to quaternary structure, homodimer. [4Fe-4S] cluster serves as cofactor. [2Fe-2S] cluster is required as a cofactor.

The catalysed reaction is (4R,5S)-dethiobiotin + (sulfur carrier)-SH + 2 reduced [2Fe-2S]-[ferredoxin] + 2 S-adenosyl-L-methionine = (sulfur carrier)-H + biotin + 2 5'-deoxyadenosine + 2 L-methionine + 2 oxidized [2Fe-2S]-[ferredoxin]. Its pathway is cofactor biosynthesis; biotin biosynthesis; biotin from 7,8-diaminononanoate: step 2/2. Its function is as follows. Catalyzes the conversion of dethiobiotin (DTB) to biotin by the insertion of a sulfur atom into dethiobiotin via a radical-based mechanism. The polypeptide is Biotin synthase (Brachyspira hyodysenteriae (strain ATCC 49526 / WA1)).